The primary structure comprises 437 residues: MNDENYSTTIYNRVQTERVYEDSDPAENGGPLYDEVHEDVRREDNLYVNELENQEYDSVAVYPVGRQGRTSASLQPETGEYVLPDEPYSKAQDPHPGEPTADEDISLEELLSPTKDHQSDSEEPQASDPEEPQASDPEEPQGPDPEEPQENGNEMEADLPSPSSFTIQNSRAFSTREISPTSYSADDVSEGNESASASPEINLFVKAGIDGESIGNCPFSQRLFMILWLKGVVFNVTTVDLKRKPADLHNLAPGTHPPFLTFNGDVKTDVNKIEEFLEETLTPEKYPRLAAKHRESNTAGIDIFVKFSAYIKNTKQQSNAALERGLTKALKKLDDYLNTPLPEEIDADTRGDDEKGSRRKFLDGDELTLADCNLLPKLHVVKIVAKKYRNYDFPAEMTGLWRYLKNAYARDEFTNTCAADSEIELAYADVAKRLSRS.

Positions 1–14 (MNDENYSTTIYNRV) are enriched in polar residues. A disordered region spans residues 1–197 (MNDENYSTTI…VSEGNESASA (197 aa)). Positions 34-45 (DEVHEDVRREDN) are enriched in basic and acidic residues. A run of 4 repeats spans residues 118 to 125 (QSDSEEPQ), 126 to 133 (ASDPEEPQ), 134 to 141 (ASDPEEPQ), and 142 to 149 (GPDPEEPQ). Positions 118–149 (QSDSEEPQASDPEEPQASDPEEPQGPDPEEPQ) are 4 X 8 AA tandem repeats of [AGQ]-[SP]-D-[PS]-E-E-P-Q. Residues 121 to 157 (SEEPQASDPEEPQASDPEEPQGPDPEEPQENGNEMEA) are compositionally biased toward acidic residues. Over residues 161–184 (SPSSFTIQNSRAFSTREISPTSYS) the composition is skewed to polar residues. The G-site signature appears at 217 to 220 (CPFS). The helical transmembrane segment at 219 to 239 (FSQRLFMILWLKGVVFNVTTV) threads the bilayer. Residues 263-427 (NGDVKTDVNK…AADSEIELAY (165 aa)) form the GST C-terminal domain.

Belongs to the chloride channel CLIC family. As to quaternary structure, component of a multimeric complex consisting of several cytoskeletal proteins, including actin, ezrin, alpha-actinin, gelsolin, and IQGAP1. Interacts with AKAP9. Interacts with TPRN. TPRN, CLIC5 and PTPQR form concentric rings at the base of stereocilia and may form a complex. Interacts with EZR, MYO6 and RDX; the proteins may work together as a complex to stabilize linkages between the plasma membrane and subjacent actin cytoskeleton at the stereocilium base. Phosphorylated. Expressed in most tissues. Higher levels found in kidney, heart, skeletal muscle, T84 and PANC-1 cells.

It is found in the golgi apparatus. The protein localises to the cytoplasm. The protein resides in the cytoskeleton. It localises to the microtubule organizing center. Its subcellular location is the centrosome. It is found in the cell cortex. The protein localises to the membrane. The protein resides in the apical cell membrane. It localises to the mitochondrion. Its subcellular location is the cell projection. It is found in the stereocilium. It carries out the reaction Na(+)(in) = Na(+)(out). The catalysed reaction is K(+)(in) = K(+)(out). The enzyme catalyses chloride(in) = chloride(out). With respect to regulation, inhibited by F-actin. In the soluble state, catalyzes glutaredoxin-like thiol disulfide exchange reactions with reduced glutathione as electron donor. Can insert into membranes and form non-selective ion channels almost equally permeable to Na(+), K(+) and Cl(-). Required for normal hearing. It is necessary for the formation of stereocilia in the inner ear and normal development of the organ of Corti. May play a role in the regulation of transepithelial ion absorption and secretion. Is required for the development and/or maintenance of the proper glomerular endothelial cell and podocyte architecture. Plays a role in formation of the lens suture in the eye, which is important for normal optical properties of the lens. This is Chloride intracellular channel protein 5 (CLIC5) from Bos taurus (Bovine).